The sequence spans 96 residues: uncharacterized protein (96 aa).

The chain crosses the membrane as a helical span at residues Val-53 to Val-71.

The protein localises to the membrane. This is an uncharacterized protein from Saccharomyces cerevisiae (strain ATCC 204508 / S288c) (Baker's yeast).